Consider the following 124-residue polypeptide: Holo-[acyl-carrier-protein] synthase (124 aa).

Mg(2+) contacts are provided by aspartate 7 and glutamate 55.

Belongs to the P-Pant transferase superfamily. AcpS family. It depends on Mg(2+) as a cofactor.

It localises to the cytoplasm. It catalyses the reaction apo-[ACP] + CoA = holo-[ACP] + adenosine 3',5'-bisphosphate + H(+). Its function is as follows. Transfers the 4'-phosphopantetheine moiety from coenzyme A to a Ser of acyl-carrier-protein. This is Holo-[acyl-carrier-protein] synthase from Borrelia garinii subsp. bavariensis (strain ATCC BAA-2496 / DSM 23469 / PBi) (Borreliella bavariensis).